The chain runs to 348 residues: Probable dual-specificity RNA methyltransferase RlmN (348 aa).

Glu-93 functions as the Proton acceptor in the catalytic mechanism. The Radical SAM core domain occupies 99–333; that stretch reads TEKRLTACLS…VSFRKSRGLD (235 aa). Cys-106 and Cys-338 are disulfide-bonded. 3 residues coordinate [4Fe-4S] cluster: Cys-113, Cys-117, and Cys-120. S-adenosyl-L-methionine is bound by residues 160 to 161, Ser-190, 219 to 221, and Asn-295; these read GE and SLH. The active-site S-methylcysteine intermediate is Cys-338.

This sequence belongs to the radical SAM superfamily. RlmN family. [4Fe-4S] cluster is required as a cofactor.

It is found in the cytoplasm. The catalysed reaction is adenosine(2503) in 23S rRNA + 2 reduced [2Fe-2S]-[ferredoxin] + 2 S-adenosyl-L-methionine = 2-methyladenosine(2503) in 23S rRNA + 5'-deoxyadenosine + L-methionine + 2 oxidized [2Fe-2S]-[ferredoxin] + S-adenosyl-L-homocysteine. The enzyme catalyses adenosine(37) in tRNA + 2 reduced [2Fe-2S]-[ferredoxin] + 2 S-adenosyl-L-methionine = 2-methyladenosine(37) in tRNA + 5'-deoxyadenosine + L-methionine + 2 oxidized [2Fe-2S]-[ferredoxin] + S-adenosyl-L-homocysteine. Functionally, specifically methylates position 2 of adenine 2503 in 23S rRNA and position 2 of adenine 37 in tRNAs. In Prochlorococcus marinus (strain MIT 9312), this protein is Probable dual-specificity RNA methyltransferase RlmN.